The following is a 1283-amino-acid chain: uncharacterized protein (1283 aa).

One can recognise an LDL-receptor class A domain in the interval 10 to 46; the sequence is ACPPNTFTCADGSCIPSDWKGDGEKDCEDGSDEEAVT. 2 disulfides stabilise this stretch: C11–C23 and C18–C36. The segment at 27–47 is disordered; it reads DWKGDGEKDCEDGSDEEAVTG. Residues 34–45 are compositionally biased toward acidic residues; that stretch reads KDCEDGSDEEAV. A glycan (N-linked (GlcNAc...) asparagine) is linked at N79. Positions 236-278 are disordered; that stretch reads STTLIVDETTESTSASAEDDDDDVLTTNTSEESTATTAHDEEV. Residues 261 to 272 show a composition bias toward low complexity; that stretch reads TTNTSEESTATT. Positions 332–389 form a coiled coil; it reads YQKTLEKEKCAIRNATSKCEALISYNNNLDCAIVTMNDECEVDAQNLVVELQEEVNDL. Disordered stretches follow at residues 621 to 651 and 1005 to 1046; these read ARPTPVTMPPRAPTAKPLPIPSAPTPPVASS and SSST…PTDG. Residues 626–647 show a composition bias toward pro residues; that stretch reads VTMPPRAPTAKPLPIPSAPTPP. Low complexity predominate over residues 1005 to 1015; the sequence is SSSTMVSTSSE. Acidic residues predominate over residues 1016–1026; the sequence is SDSESAPEQET. The span at 1027–1044 shows a compositional bias: low complexity; that stretch reads EPTVPSTTETTESPSTPT. A helical transmembrane segment spans residues 1263–1283; the sequence is VQSSVSFHIILAALIPFFALF.

It localises to the membrane. This is an uncharacterized protein from Caenorhabditis elegans.